Reading from the N-terminus, the 272-residue chain is F-box protein PP2-B10 (272 aa).

The region spanning 11–57 is the F-box domain; sequence SSPFDSFPEDCISYIISFTNPRDACVAATVSKTFESTVKSDIIWEKF.

As to quaternary structure, part of a SCF (ASK-cullin-F-box) protein ligase complex. Interacts with SKP1B/ASK2, ASK11 and ASK12.

It functions in the pathway protein modification; protein ubiquitination. In terms of biological role, component of SCF(ASK-cullin-F-box) E3 ubiquitin ligase complexes, which may mediate the ubiquitination and subsequent proteasomal degradation of target proteins. In Arabidopsis thaliana (Mouse-ear cress), this protein is F-box protein PP2-B10 (PP2B10).